A 902-amino-acid chain; its full sequence is Protein translocase subunit SecA (902 aa).

Residues glutamine 87, 105–109 (GEGKT), and aspartate 512 each bind ATP. The interval 836–902 (DVEKVEEQHR…KFKQCCGKLK (67 aa)) is disordered. Basic and acidic residues predominate over residues 840 to 863 (VEEQHRKSENAPREYQHEEVEHVG). Residues cysteine 886, cysteine 888, cysteine 897, and cysteine 898 each contribute to the Zn(2+) site.

The protein belongs to the SecA family. In terms of assembly, monomer and homodimer. Part of the essential Sec protein translocation apparatus which comprises SecA, SecYEG and auxiliary proteins SecDF-YajC and YidC. Zn(2+) serves as cofactor.

It is found in the cell inner membrane. The protein localises to the cytoplasm. It carries out the reaction ATP + H2O + cellular proteinSide 1 = ADP + phosphate + cellular proteinSide 2.. Part of the Sec protein translocase complex. Interacts with the SecYEG preprotein conducting channel. Has a central role in coupling the hydrolysis of ATP to the transfer of proteins into and across the cell membrane, serving both as a receptor for the preprotein-SecB complex and as an ATP-driven molecular motor driving the stepwise translocation of polypeptide chains across the membrane. The protein is Protein translocase subunit SecA of Pseudoalteromonas translucida (strain TAC 125).